Reading from the N-terminus, the 85-residue chain is Acyl carrier protein ScoB (85 aa).

The region spanning 1–77 (MPAPLTLDGF…QWWQLLSARQ (77 aa)) is the Carrier domain. At Ser38 the chain carries O-(pantetheine 4'-phosphoryl)serine.

Belongs to the acyl carrier protein (ACP) family. Requires pantetheine 4'-phosphate as cofactor.

It participates in lipid metabolism; fatty acid metabolism. In terms of biological role, acyl-carrier protein (ACP) involved in the biosynthesis of a unique class of isonitrile lipopeptides (INLPs). Is the dedicated ACP for the loading of activated acyl groups catalyzed by ScoC. This is Acyl carrier protein ScoB from Streptomyces coeruleorubidus.